We begin with the raw amino-acid sequence, 259 residues long: Ras-related protein Rab-34 (259 aa).

Position 1 is an N-acetylmethionine (M1). GTP is bound by residues S62, V63, G64, K65, T66, D78, Y81, and T84. Residue T66 coordinates Mg(2+). Residues 71 to 89 carry the Switch 1 motif; it reads RFCKDTFDKNYKATIGVDF. 2 residues coordinate Mg(2+): T84 and D107. Residues 108 to 127 carry the Switch 2 motif; the sequence is TAGQERFKCIASTYYRGAQA. GTP-binding residues include G110, K167, D169, and S198. S241 bears the Phosphoserine mark. 2 S-geranylgeranyl cysteine lipidation sites follow: C257 and C258.

Belongs to the small GTPase superfamily. Rab family. Interacts with RILP. The GTP-bound form interacts with REP15. Mg(2+) serves as cofactor.

The protein localises to the cytoplasm. It localises to the golgi apparatus. Its subcellular location is the cytoplasmic vesicle. The protein resides in the phagosome. It is found in the phagosome membrane. The protein localises to the cell projection. It localises to the cilium. Its subcellular location is the cytoskeleton. The protein resides in the microtubule organizing center. It is found in the centrosome. The protein localises to the centriole. It catalyses the reaction GTP + H2O = GDP + phosphate + H(+). Regulated by guanine nucleotide exchange factors (GEFs) which promote the exchange of bound GDP for free GTP. Regulated by GTPase activating proteins (GAPs) which increase the GTP hydrolysis activity. Inhibited by GDP dissociation inhibitors (GDIs). The small GTPases Rab are key regulators of intracellular membrane trafficking, from the formation of transport vesicles to their fusion with membranes. Rabs cycle between an inactive GDP-bound form and an active GTP-bound form that is able to recruit to membranes different sets of downstream effectors directly responsible for vesicle formation, movement, tethering and fusion. RAB34 transports protein involved in the redistribution of lysosomes to the peri-Golgi region. Plays a role in the maturation of phagosomes that engulf pathogens, such as S.aureus and M.tuberculosis. Plays a role in the fusion of phagosomes with lysosomes. Required for the early steps of intracellular ciliogenesis, the cilium assembly pathway initiated by trafficking and docking of ciliary vesicles to the centrioles in the cytoplasm, followed by axoneme formation in the cytoplasm. After axoneme elongation, the centrioles migrate close to the cell surface so that ciliary vesicles can fuse with the plasma membrane to expose cilia to the extracellular space. It seems dispensable for ciliogenesis via the extracellular pathway where cilium assembly begins after migration and docking of the centriole to the plasma membrane. Also acts as a positive regulator of hedgehog signaling and regulates ciliary function. In Mus musculus (Mouse), this protein is Ras-related protein Rab-34.